Reading from the N-terminus, the 254-residue chain is tRNA threonylcarbamoyladenosine dehydratase (254 aa).

It belongs to the HesA/MoeB/ThiF family.

Its function is as follows. Catalyzes the ATP-dependent dehydration of threonylcarbamoyladenosine at position 37 (t(6)A37) to form cyclic t(6)A37 (ct(6)A37) in tRNAs that read codons beginning with adenine. In Bacillus subtilis (strain 168), this protein is tRNA threonylcarbamoyladenosine dehydratase (tcdA).